The sequence spans 387 residues: DNA-damage-repair/toleration protein 111 (387 aa).

Residues 1 to 213 form a disordered region; the sequence is MLGGLYGDLP…TSGLGVGAGG (213 aa). Residues 19–29 are compositionally biased toward low complexity; sequence SGNSSSVWSSS. The span at 103-158 shows a compositional bias: basic and acidic residues; it reads DPARPNDYEEYKREKKRKATEAEMKREMDKRRQEDEERDKREREEREKERERDNSD. Positions 214–260 constitute a G-patch domain; sequence QMTAAQRMMAKMGWKQGQGLGKSEQGITTPLMAKKTDRRAGVIVNAS. Positions 283–369 constitute an RRM domain; sequence RVLLLRNMVG…RTVRATFYDE (87 aa).

As to quaternary structure, component of the SWAP1-SFPS-RRC1 splicing factor complex which modulates pre-mRNA splicing to promote photomorphogenesis. Interacts with SWAP1 in a light-independent manner. Associates with the photoreceptor phytochrome B (phyB) in nuclear photobodies upon response to red light. Binds to the splicing factor 1 SF1, involved in 3' splicing site recognition. In terms of tissue distribution, expressed ubiquitously with highest levels in dry seeds and in cells surrounding the base of trichomes and guard cells.

It is found in the nucleus. It localises to the nucleus speckle. Functionally, as a member of the SWAP1-SFPS-RRC1 splicing factor complex, modulates photomorphogenesis by regulating the gene expression and pre-messenger RNA (mRNA) alternative splicing of a large number of genes, including those involved in plant responses to light signaling, probably by helping in the 3' splice site determination. Associates with and regulates EARLY FLOWERING 3 (ELF3) mRNA processing, a key component of the circadian clock also involved in photomorphogenesis. Required for light-regulated (red, far-red and blue lights) photomorphogenesis in a PHYB- and PHYTOCHROME INTERACTING FACTORS- (PIFs) dependent manner. Promotes flowering under both short (SD) and long days (LD). Controls abscisic acid (ABA) sensitivity during seed development, stomatal responsiveness and germination by monitoring ABI3 splicing, upstream of the splicing factor SUPPRESSOR OF ABI3-ABI5. Seems to be involved in the resistance to UV light and chemical DNA-damaging agents. The sequence is that of DNA-damage-repair/toleration protein 111 from Arabidopsis thaliana (Mouse-ear cress).